We begin with the raw amino-acid sequence, 130 residues long: Small ribosomal subunit protein uS11 (130 aa).

The interval 108 to 130 (IEDVTPIPHDGTGRPGGKRGRRV) is disordered.

Belongs to the universal ribosomal protein uS11 family. As to quaternary structure, part of the 30S ribosomal subunit.

Located on the platform of the 30S subunit. This Methanothermobacter thermautotrophicus (strain ATCC 29096 / DSM 1053 / JCM 10044 / NBRC 100330 / Delta H) (Methanobacterium thermoautotrophicum) protein is Small ribosomal subunit protein uS11.